The chain runs to 154 residues: Transcription antitermination protein NusB (154 aa).

This sequence belongs to the NusB family.

Its function is as follows. Involved in transcription antitermination. Required for transcription of ribosomal RNA (rRNA) genes. Binds specifically to the boxA antiterminator sequence of the ribosomal RNA (rrn) operons. The protein is Transcription antitermination protein NusB of Hyphomonas neptunium (strain ATCC 15444).